A 166-amino-acid chain; its full sequence is Urocortin-3 (166 aa).

The N-terminal stretch at 1–23 (MLVPAPFLLVLLLLLGAPQVGLS) is a signal peptide. The propeptide occupies 24 to 123 (QRSPKAGSSP…QDKAKSDRRT (100 aa)). Positions 41–51 (REAEKSQRKDT) are enriched in basic and acidic residues. The interval 41–123 (REAEKSQRKD…QDKAKSDRRT (83 aa)) is disordered. Residues 68–77 (EDQEGQEEED) show a composition bias toward acidic residues. Positions 86–96 (SVGGGGGGGAG) are enriched in gly residues. Residues 113-123 (SQDKAKSDRRT) show a composition bias toward basic and acidic residues. An Isoleucine amide modification is found at Ile-162.

It belongs to the sauvagine/corticotropin-releasing factor/urotensin I family. As to quaternary structure, binds with high affinity to CRF receptors 2-alpha and 2-beta.

The protein localises to the secreted. In terms of biological role, suppresses food intake, delays gastric emptying and decreases heat-induced edema. Might represent an endogenous ligand for maintaining homeostasis after stress. The protein is Urocortin-3 (UCN3) of Bos taurus (Bovine).